The primary structure comprises 685 residues: Putative pentatricopeptide repeat-containing protein At3g08820 (685 aa).

PPR repeat units lie at residues 75-109 (NIFL…GLYL), 110-144 (HGFT…GFNH), 145-175 (DVAA…IPDR), 176-210 (SVVT…GVKP), 211-245 (DSYF…EMQK), 246-276 (NSFV…MVEK), 277-311 (DIVT…NLKP), 312-346 (DQFS…EFLT), 347-381 (NLFM…DIVI), 383-412 (NAAI…GISP), 413-443 (DGST…ISCV), and 449-479 (TVEH…MPMR). The interval 484-559 (VWGALLSGCR…IPGYSWIELE (76 aa)) is type E motif. A type E(+) motif region spans residues 560-590 (GKVHEFLADDKSHPLSDKIYAKLEDLGNEMR). Positions 591-685 (LMGFVPTTEF…NGSCSCNDYW (95 aa)) are type DYW motif.

This sequence belongs to the PPR family. PCMP-H subfamily.

This is Putative pentatricopeptide repeat-containing protein At3g08820 (PCMP-H84) from Arabidopsis thaliana (Mouse-ear cress).